The chain runs to 821 residues: Glycogen phosphorylase (821 aa).

N6-(pyridoxal phosphate)lysine is present on Lys-667.

The protein belongs to the glycogen phosphorylase family. Pyridoxal 5'-phosphate serves as cofactor.

The enzyme catalyses [(1-&gt;4)-alpha-D-glucosyl](n) + phosphate = [(1-&gt;4)-alpha-D-glucosyl](n-1) + alpha-D-glucose 1-phosphate. In terms of biological role, phosphorylase is an important allosteric enzyme in carbohydrate metabolism. Enzymes from different sources differ in their regulatory mechanisms and in their natural substrates. However, all known phosphorylases share catalytic and structural properties. The chain is Glycogen phosphorylase (glgP) from Haemophilus influenzae (strain ATCC 51907 / DSM 11121 / KW20 / Rd).